The chain runs to 288 residues: MSQFSFTKMHGLGNSYIYVNMFEEQIPEEDLALVAEKVSNINTGIGADGMILICPSDVAPVKMRMFNNDGSEGKSCGNGLRCVAKYAYEHKLVEDTVFTIETLAGIVTAEVTVEEGKVTLAKIDMGAPRLTRAEIPMLGEGETPFIRENFLYNNHRYAFTAVSMGNSHAVIFVDDVEQAPLTTLGPVLETHEMFPERVNVEFIEILNEEEMNFRVWERGSGVTQACGTGACAAVVASILNGKMERGKEITVHLAGGDLMIAWTEEGNVLMKGPAEVICHGVYEYKIEA.

Substrate is bound by residues Asn-14 and Asn-67. The active-site Proton donor is the Cys-76. Residues 77 to 78 (GN), Asn-166, Asn-199, and 217 to 218 (ER) each bind substrate. Cys-226 acts as the Proton acceptor in catalysis. 227-228 (GT) is a binding site for substrate.

This sequence belongs to the diaminopimelate epimerase family. In terms of assembly, homodimer.

The protein resides in the cytoplasm. The enzyme catalyses (2S,6S)-2,6-diaminopimelate = meso-2,6-diaminopimelate. Its pathway is amino-acid biosynthesis; L-lysine biosynthesis via DAP pathway; DL-2,6-diaminopimelate from LL-2,6-diaminopimelate: step 1/1. Its function is as follows. Catalyzes the stereoinversion of LL-2,6-diaminopimelate (L,L-DAP) to meso-diaminopimelate (meso-DAP), a precursor of L-lysine and an essential component of the bacterial peptidoglycan. The chain is Diaminopimelate epimerase from Bacillus thuringiensis (strain Al Hakam).